An 89-amino-acid chain; its full sequence is Small ribosomal subunit protein uS15 (89 aa).

Belongs to the universal ribosomal protein uS15 family. As to quaternary structure, part of the 30S ribosomal subunit. Forms a bridge to the 50S subunit in the 70S ribosome, contacting the 23S rRNA.

Its function is as follows. One of the primary rRNA binding proteins, it binds directly to 16S rRNA where it helps nucleate assembly of the platform of the 30S subunit by binding and bridging several RNA helices of the 16S rRNA. Forms an intersubunit bridge (bridge B4) with the 23S rRNA of the 50S subunit in the ribosome. The chain is Small ribosomal subunit protein uS15 from Chelativorans sp. (strain BNC1).